A 602-amino-acid chain; its full sequence is Sulfite reductase [NADPH] hemoprotein beta-component (602 aa).

Residues 1–15 are compositionally biased toward basic and acidic residues; it reads MDDHKTASPPRERSY. The interval 1-24 is disordered; that stretch reads MDDHKTASPPRERSYETPPAERPI. The [4Fe-4S] cluster site is built by cysteine 458, cysteine 464, cysteine 503, and cysteine 507. Position 507 (cysteine 507) interacts with siroheme.

The protein belongs to the nitrite and sulfite reductase 4Fe-4S domain family. As to quaternary structure, alpha(8)-beta(8). The alpha component is a flavoprotein, the beta component is a hemoprotein. Siroheme is required as a cofactor. The cofactor is [4Fe-4S] cluster.

It carries out the reaction hydrogen sulfide + 3 NADP(+) + 3 H2O = sulfite + 3 NADPH + 4 H(+). Its pathway is sulfur metabolism; hydrogen sulfide biosynthesis; hydrogen sulfide from sulfite (NADPH route): step 1/1. Component of the sulfite reductase complex that catalyzes the 6-electron reduction of sulfite to sulfide. This is one of several activities required for the biosynthesis of L-cysteine from sulfate. This Methylobacterium nodulans (strain LMG 21967 / CNCM I-2342 / ORS 2060) protein is Sulfite reductase [NADPH] hemoprotein beta-component.